The following is a 272-amino-acid chain: Oligodendrocyte transcription factor 3 (272 aa).

The span at 1–14 (MNSDSSSVSSRASS) shows a compositional bias: low complexity. The tract at residues 1 to 71 (MNSDSSSVSS…KAAGESSKYK (71 aa)) is disordered. A compositionally biased stretch (basic residues) spans 24–33 (DHHHRHHHHQ). Residues 36–46 (RLNSVSSTQGD) show a composition bias toward polar residues. Residues 68 to 89 (SKYKIKKQLSEQDLQQLRLKIN) adopt a coiled-coil conformation. In terms of domain architecture, bHLH spans 83-137 (QLRLKINGRERKRMHDLNLAMDGLREVMPYAHGPSVRKLSKIATLLLARNYILML).

It is found in the nucleus. May determine the distinct specification program of class A neurons in the dorsal part of the spinal cord and suppress specification of class B neurons. The sequence is that of Oligodendrocyte transcription factor 3 (OLIG3) from Homo sapiens (Human).